The chain runs to 60 residues: MAVQQNKKSPSKRGMHRSHNALNTPGLAIEPTTGETHLRHHISATGFYRGRKVLKTKADA.

Residues 1-36 (MAVQQNKKSPSKRGMHRSHNALNTPGLAIEPTTGET) form a disordered region. Positions 9-19 (SPSKRGMHRSH) are enriched in basic residues.

It belongs to the bacterial ribosomal protein bL32 family.

This chain is Large ribosomal subunit protein bL32, found in Methylibium petroleiphilum (strain ATCC BAA-1232 / LMG 22953 / PM1).